Consider the following 25-residue polypeptide: TPDHQRYVELFIVVDHGMYTKYNGD.

Position 9 (Glu9) interacts with Ca(2+).

The protein belongs to the venom metalloproteinase (M12B) family. In terms of assembly, monomer. Zn(2+) is required as a cofactor. As to expression, expressed by the venom gland.

It is found in the secreted. Inhibited by EDTA, beta-mercaptoethanol, but not by PMSF, p-tosyl-L-phenylalanine chloromethyl ketone, p-tosyl-L-lysine chloromethyl ketone, soybean trypsin inhibitor and aprotinin. In terms of biological role, metalloprotease that is highly active against alpha-(FGA) and beta-chains (FGB) of fibrinogen molecules. This Crotalus atrox (Western diamondback rattlesnake) protein is Snake venom metalloproteinase catroxase.